The sequence spans 87 residues: Putative defensin-like protein 169 (87 aa).

An N-terminal signal peptide occupies residues 1–21 (MKKTFSFTVLILFVIPLLVTG). Disulfide bonds link C36–C86, C48–C74, C53–C80, and C57–C82.

The protein belongs to the DEFL family.

Its subcellular location is the secreted. The polypeptide is Putative defensin-like protein 169 (Arabidopsis thaliana (Mouse-ear cress)).